Consider the following 156-residue polypeptide: Small ribosomal subunit protein uS15 (156 aa).

Residues 1 to 67 (MARMHTRRRG…GVQGTPIPDV (67 aa)) are disordered. A compositionally biased stretch (basic and acidic residues) spans 10-19 (GSSDSDKPAA). Over residues 21–32 (EPPEWSDVDEDA) the composition is skewed to acidic residues.

It belongs to the universal ribosomal protein uS15 family. In terms of assembly, part of the 30S ribosomal subunit.

The polypeptide is Small ribosomal subunit protein uS15 (Haloarcula marismortui (strain ATCC 43049 / DSM 3752 / JCM 8966 / VKM B-1809) (Halobacterium marismortui)).